Reading from the N-terminus, the 348-residue chain is Rhodopsin (348 aa).

At Met-1 the chain carries N-acetylmethionine. The Extracellular portion of the chain corresponds to 1-36; sequence MNGTEGPNFYVPFSNKTGVVRSPFEYPQYYLAEPWQ. Asn-2 and Asn-15 each carry an N-linked (GlcNAc...) asparagine glycan. Residues 37–61 form a helical membrane-spanning segment; the sequence is FSMLAAYMFLLIVLGFPINFLTLYV. Over 62-73 the chain is Cytoplasmic; that stretch reads TVQHKKLRTPLN. A helical membrane pass occupies residues 74–96; sequence YILLNLAVADLFMVFGGFTTTLY. Topologically, residues 97 to 110 are extracellular; that stretch reads TSLHGYFVFGPTGC. A disulfide bond links Cys-110 and Cys-187. The chain crosses the membrane as a helical span at residues 111–133; sequence NLEGFFATLGGEIALWSLVVLAI. Residues 134–136 carry the 'Ionic lock' involved in activated form stabilization motif; sequence ERY. Topologically, residues 134 to 152 are cytoplasmic; sequence ERYVVVCKPMSNFRFGENH. A helical membrane pass occupies residues 153–173; that stretch reads AIMGVGLTWVMALACAAPPLV. The Extracellular segment spans residues 174–202; that stretch reads GWSRYIPEGMQCSCGIDYYTLKPEVNNES. Glu-201 contributes to the Zn(2+) binding site. Residues 203-224 traverse the membrane as a helical segment; it reads FVIYMFVVHFTIPMIVIFFCYG. Over 225 to 252 the chain is Cytoplasmic; it reads QLVFTVKEAAAQQQESATTQKAEKEVTR. A helical membrane pass occupies residues 253 to 274; it reads MVIIMVIAFLICWVPYASVAFY. Residues 275-286 lie on the Extracellular side of the membrane; the sequence is IFTHQGFNFGPI. Gln-279 is a binding site for Zn(2+). Residues 287–308 form a helical membrane-spanning segment; it reads FMTLPAFFAKAAAIYNPVIYIM. The residue at position 296 (Lys-296) is an N6-(retinylidene)lysine. The Cytoplasmic portion of the chain corresponds to 309-348; that stretch reads MNKQFRTCMITTLCCGKNPLGDDEVSASASKTETSQVAPA. 2 S-palmitoyl cysteine lipidation sites follow: Cys-322 and Cys-323. An interaction with SAG region spans residues 330–348; that stretch reads DDEVSASASKTETSQVAPA. Residues Ser-334 and Ser-338 each carry the phosphoserine modification. A phosphothreonine mark is found at Thr-340 and Thr-342. Residue Ser-343 is modified to Phosphoserine.

Belongs to the G-protein coupled receptor 1 family. Opsin subfamily. As to quaternary structure, homodimer. Interacts (phosphorylated form) with SAG. Interacts with GNAT1. Interacts with GNAT3. SAG and G-proteins compete for a common binding site. Interacts with GRK1. Interacts with PRCD; the interaction promotes PRCD stability. Forms a complex with ASAP1 and ARF4. Forms a complex with ASAP1, RAB11A, Rabin8/RAB3IP, ARF4 and RAB11FIP3; the complex regulates Golgi-to-cilia rhodopsin/RHO transport in photoreceptors. Phosphorylated on some or all of the serine and threonine residues present in the C-terminal region. In terms of processing, contains one covalently linked retinal chromophore. Upon light absorption, the covalently bound 11-cis-retinal is converted to all-trans-retinal. After hydrolysis of the Schiff base and release of the covalently bound all-trans-retinal, active rhodopsin is regenerated by binding of a fresh molecule of 11-cis-retinal.

It localises to the membrane. It is found in the cell projection. The protein localises to the cilium. Its subcellular location is the photoreceptor outer segment. Functionally, photoreceptor required for image-forming vision at low light intensity. Required for photoreceptor cell viability after birth. Light-induced isomerization of 11-cis to all-trans retinal triggers a conformational change that activates signaling via G-proteins. Subsequent receptor phosphorylation mediates displacement of the bound G-protein alpha subunit by the arrestin SAG and terminates signaling. The polypeptide is Rhodopsin (RHO) (Pagophilus groenlandicus (Harp seal)).